Here is a 137-residue protein sequence, read N- to C-terminus: Fluoride-specific ion channel FluC 1 (137 aa).

Transmembrane regions (helical) follow at residues 3 to 23, 42 to 62, 69 to 89, and 107 to 127; these read PLVV…RLVL, INVT…GHGL, ILGT…YEAV, and MMFL…LAVA. Gly76 and Thr79 together coordinate Na(+).

This sequence belongs to the fluoride channel Fluc/FEX (TC 1.A.43) family.

It localises to the cell membrane. It carries out the reaction fluoride(in) = fluoride(out). Its activity is regulated as follows. Na(+) is not transported, but it plays an essential structural role and its presence is essential for fluoride channel function. In terms of biological role, fluoride-specific ion channel. Important for reducing fluoride concentration in the cell, thus reducing its toxicity. In Leifsonia xyli subsp. xyli (strain CTCB07), this protein is Fluoride-specific ion channel FluC 1.